The chain runs to 512 residues: MIYIHKKIKNPIKDGIEIGEEIKRNVGRASLIIFITSILERDKLKQVFDGMKQHIPLDNLIGCSTGGTFSGKDYIKEDGVLILAFDEYYKSAISCEKVDREAEYVGKKIADKIKTCIRDKYPKLDIDDNFLGFVFFDWNVDSEQEILDVLGRELTIPIIGGTAADDGSFDKFFQIYKGEVVKDCCVFGVVGGKLKFDLIYGHGYEPTDIYARVTKAEGKVVYELDGKPAYQRYLEMLSEYTKLPMDIIKKYFYRDLRRLDFYLVHPLGFMDINGNYITAFLERVEENTLVFRRDILEGSFLVLMKTDIEKQVKSIVDELKKAEDFENPLIFINECYGREVLKNSMFREFEEDILKYFLNFYKAGKKVEEYVIEDNCIGWLSYGETIAKDLIRFHNNLSFTGVIFELSQSSNINWREELKNFNFEDDEIEVIVNLINKQLTAKELLQLTNLSQTKLYHILNKLEKEGIIKSVSGKPKLYYIDNIKEILQKTHEKIEHENMVKKIKRKKLLRLL.

This is an uncharacterized protein from Methanocaldococcus jannaschii (strain ATCC 43067 / DSM 2661 / JAL-1 / JCM 10045 / NBRC 100440) (Methanococcus jannaschii).